We begin with the raw amino-acid sequence, 413 residues long: 2,3-diketo-5-methylthiopentyl-1-phosphate enolase (413 aa).

Lys98 serves as the catalytic Proton acceptor. Substrate contacts are provided by residues Lys147, 173-176, His264, Gly337, and 359-360; these read KDDE and GG. Mg(2+)-binding residues include Lys173, Asp175, and Glu176. Lys173 carries the post-translational modification N6-carboxylysine.

It belongs to the RuBisCO large chain family. Type IV subfamily. Homodimer. It depends on Mg(2+) as a cofactor.

The enzyme catalyses 5-methylsulfanyl-2,3-dioxopentyl phosphate = 2-hydroxy-5-methylsulfanyl-3-oxopent-1-enyl phosphate. Its pathway is amino-acid biosynthesis; L-methionine biosynthesis via salvage pathway; L-methionine from S-methyl-5-thio-alpha-D-ribose 1-phosphate: step 3/6. Catalyzes the enolization of 2,3-diketo-5-methylthiopentyl-1-phosphate (DK-MTP-1-P) into 2-hydroxy-3-keto-5-methylthiopentenyl-1-phosphate (HK-MTPenyl-1-P). The protein is 2,3-diketo-5-methylthiopentyl-1-phosphate enolase of Geobacillus thermodenitrificans (strain NG80-2).